An 804-amino-acid polypeptide reads, in one-letter code: Endoplasmin (804 aa).

Positions 1–21 (MRVLWVLGLCCVLLTFGFVRA) are cleaved as a signal peptide. The short motif at 42–44 (SRT) is the SRT pseudosubstrate motif element. An N-linked (GlcNAc...) asparagine glycan is attached at Asn62. Position 64 is a phosphoserine (Ser64). Asn107 carries N-linked (GlcNAc...) asparagine glycosylation. ATP-binding residues include Asn107, Asp149, and Asn162. At Lys168 the chain carries N6-(2-hydroxyisobutyryl)lysine. Ser172 carries the phosphoserine modification. ATP is bound at residue Phe199. Residue Asn217 is glycosylated (N-linked (GlcNAc...) asparagine). Residues 288–323 (TVEEPLEEDETAQEEKEEADDEAAVEEEEEEKKPKT) form a disordered region. Acidic residues predominate over residues 289-317 (VEEPLEEDETAQEEKEEADDEAAVEEEEE). At Ser403 the chain carries Phosphoserine. An N6-succinyllysine modification is found at Lys404. Asn445 carries an N-linked (GlcNAc...) asparagine glycan. Residue Ser447 is modified to Phosphoserine. The residue at position 479 (Lys479) is an N6-acetyllysine. Residues Asn481 and Asn502 are each glycosylated (N-linked (GlcNAc...) asparagine). Lys633 carries the post-translational modification N6-succinyllysine. The interval 749 to 804 (IDPEAQVEEEPEEEPEDTTEDTTDDSEQDEEETDAGAEEEEEEQETEKEPTEKDEL) is disordered. Over residues 753–794 (AQVEEEPEEEPEDTTEDTTDDSEQDEEETDAGAEEEEEEQET) the composition is skewed to acidic residues. Positions 795 to 804 (EKEPTEKDEL) are enriched in basic and acidic residues. The short motif at 801-804 (KDEL) is the Prevents secretion from ER element.

The protein belongs to the heat shock protein 90 family. In terms of assembly, homodimer; disulfide-linked. Component of an EIF2 complex at least composed of CELF1/CUGBP1, CALR, CALR3, EIF2S1, EIF2S2, HSP90B1 and HSPA5. Part of a large chaperone multiprotein complex comprising DNAJB11, HSP90B1, HSPA5, HYOU, PDIA2, PDIA4, PDIA6, PPIB, SDF2L1, UGGT1 and very small amounts of ERP29, but not, or at very low levels, CALR nor CANX. Interacts with AIMP1; regulates its retention in the endoplasmic reticulum. Hyperglycosylated form interacts with OS9; promoting its degradation by the endoplasmic reticulum associated degradation (ERAD). Interacts with CNPY3. This interaction is disrupted in the presence of ATP. Interacts with TLR4 and TLR9, but not with TLR3. Interacts with MZB1 in a calcium-dependent manner. Interacts with METTL23. Interacts with IL1B; the interaction facilitates cargo translocation into the ERGIC. Interacts with EIF2AK3. In terms of processing, phosphorylated by CK2. Post-translationally, N-glycosylated cotranslationally at Asn-217 by STT3A-containing OST-A complex: this glycosylation is constitutive. In response to various stress, 5 additional facultative sites (Asn-62, Asn-107, Asn-445, Asn-481 and Asn-502) can be glycosylated post-translationally by STT3B-containing OST-B complex, leading to a hyperglycosylated form that is degraded by the ER-associated degradation (ERAD) pathway. In normal conditions, the OST-A complex together with CCDC134 prevent glycosylation at facultative sites during protein folding, thereby preventing hyperglycosylation. Mechanistically, nascent HSP90B1 is tethered during translation to a specialized CCDC134-containing translocon that forms a microenvironment for its folding, in which STT3A associates with the SRT pseudosubstrate motif, and prevents access to facultative glycosylation sites until folding is completed, rendering its facultative sites inaccessible to the OST-B complex.

It localises to the endoplasmic reticulum lumen. The protein resides in the sarcoplasmic reticulum lumen. It is found in the melanosome. It catalyses the reaction ATP + H2O = ADP + phosphate + H(+). ATP-dependent chaperone involved in the processing of proteins in the endoplasmic reticulum, regulating their transport. Together with MESD, acts as a modulator of the Wnt pathway by promoting the folding of LRP6, a coreceptor of the canonical Wnt pathway. When associated with CNPY3, required for proper folding of Toll-like receptors. Promotes folding and trafficking of TLR4 to the cell surface. May participate in the unfolding of cytosolic leaderless cargos (lacking the secretion signal sequence) such as the interleukin 1/IL-1 to facilitate their translocation into the ERGIC (endoplasmic reticulum-Golgi intermediate compartment) and secretion; the translocation process is mediated by the cargo receptor TMED10. In Rattus norvegicus (Rat), this protein is Endoplasmin.